Here is a 482-residue protein sequence, read N- to C-terminus: Lipoamide acyltransferase component of branched-chain alpha-keto acid dehydrogenase complex, mitochondrial (482 aa).

Residues 1–61 (MAAARVLRTW…HSLRTAAVLQ (61 aa)) constitute a mitochondrion transit peptide. The 76-residue stretch at 64-139 (VVQFKLSDIG…YVGKPLIDIE (76 aa)) folds into the Lipoyl-binding domain. Lysine 105 is subject to N6-lipoyllysine. N6-succinyllysine is present on lysine 133. Positions 145-160 (DSEEDVVETPAVSHDE) are critical for association with PPM1K. Positions 172–209 (LATPAVRRLAMENNIKLSEVVGSGKDGRILKEDILSFL) constitute a Peripheral subunit-binding (PSBD) domain. Lysine 196 is subject to N6-acetyllysine; alternate. An N6-succinyllysine; alternate modification is found at lysine 196. An N6-acetyllysine modification is found at lysine 202. The segment at 217–252 (LPPSPKSEITPPPPQPKDRTFPTPIAKPPVFTGKDR) is disordered. Pro residues predominate over residues 218-231 (PPSPKSEITPPPPQ). Residue serine 220 is modified to Phosphoserine. Lysine 243 and lysine 250 each carry N6-acetyllysine. Lysine 261 bears the N6-succinyllysine mark. Lysine 289 bears the N6-acetyllysine; alternate mark. An N6-succinyllysine; alternate modification is found at lysine 289. A CoA-binding site is contributed by arginine 291. N6-acetyllysine is present on residues lysine 295 and lysine 304. CoA is bound by residues serine 306, aspartate 349, glutamine 378, serine 399, asparagine 400, serine 403, glycine 424, and isoleucine 426. Lysine 435 is subject to N6-acetyllysine. Residue lysine 440 is modified to N6-acetyllysine; alternate. Lysine 440 is modified (N6-succinyllysine; alternate). Residues histidine 452 and aspartate 456 contribute to the active site.

It belongs to the 2-oxoacid dehydrogenase family. In terms of assembly, forms a 24-polypeptide structural core with octahedral symmetry that represents the E2 component of the branched-chain alpha-ketoacid dehydrogenase (BCKDH) complex. The BCKDH complex is composed of three major building blocks E1, E2 and E3. It is organized around E2, a 24-meric cubic core composed of DBT, to which are associated 6 to 12 copies of E1, and approximately 6 copies of the dehydrogenase E3, a DLD dimer. Interacts with PPM1K with a 24:1 stoichiometry; the N-terminal region (residues 49-61) of PPM1K and C-terminal linker of the lipoyl domain of DBT/E2 (residues 145-160) are critical for this interaction whereas the lipoyl prosthetic group is dispensable. This interaction requires colocalization in mitochondria. PPM1K competes with BCKDK for binding to DBT; this interaction is modulated by branched-chain alpha-keto acids (BCKAs). At steady state, BCKDH holoenzyme preferentially binds BCKDK and BCKDHA is phosphorylated. In response to high levels of BCKAs, BCKDK is replaced by PPM1K leading to BCKDHA dephosphorylation. (R)-lipoate serves as cofactor.

Its subcellular location is the mitochondrion matrix. The enzyme catalyses N(6)-[(R)-dihydrolipoyl]-L-lysyl-[protein] + 2-methylpropanoyl-CoA = N(6)-[(R)-S(8)-2-methylpropanoyldihydrolipoyl]-L-lysyl-[protein] + CoA. The branched-chain alpha-keto dehydrogenase complex catalyzes the overall conversion of alpha-keto acids to acyl-CoA and CO(2). It contains multiple copies of three enzymatic components: branched-chain alpha-keto acid decarboxylase (E1), lipoamide acyltransferase (E2) and lipoamide dehydrogenase (E3). Within this complex, the catalytic function of this enzyme is to accept, and to transfer to coenzyme A, acyl groups that are generated by the branched-chain alpha-keto acid decarboxylase component. In Mus musculus (Mouse), this protein is Lipoamide acyltransferase component of branched-chain alpha-keto acid dehydrogenase complex, mitochondrial (Dbt).